The chain runs to 25 residues: M-poneritoxin-Na1b (25 aa).

It belongs to the non-disulfide-bridged peptide (NDBP) superfamily. Medium-length antimicrobial peptide (group 3) family. Ponericin-W subfamily. In terms of tissue distribution, expressed by the venom gland.

It localises to the secreted. Its subcellular location is the target cell membrane. Membrane-perturbating peptide with multiple activities. It is insecticidal, since it induces reversible paralysis in insects (L.cuprina) after 1 hour, but fails to kill flies. It shows a relatively strong and broad-spectrum antibacterial activity against both Gram-positive and Gram-negative bacteria (MIC&lt;20 uM). It is also anthelmintic, since it potently inhibits the larval development of the major pathogenic nematode of ruminants (H.contortus, IC(50)=2.8 uM). Interestingly, only at 10 uM, it increases adult males motility of the other nematode B.malayi for 24 hours post-treatment, followed by a reduction in motility for the rest of the experiment. It shows cytotoxic activity against HEK293 cells (EC(50)=4-6 uM) and induces hemolysis in human erythrocytes (EC(50)=40-62 uM). In addition, it causes an important increase in intracellular calcium concentration on neuronal and epithelial cell lines, which supports a non-specific membrane perturbation mechanism of action. In vivo, it induces pain by intraplantar injection into mice, suggesting a defensive function against vertebrate predators. This Neoponera apicalis (Ant) protein is M-poneritoxin-Na1b.